A 734-amino-acid chain; its full sequence is Photosystem I P700 chlorophyll a apoprotein A2 (734 aa).

Transmembrane regions (helical) follow at residues 46-69, 135-158, 175-199, 273-291, 330-353, 369-395, 417-439, and 517-535; these read IFASHFGQLAIIFLWTSGNLFHVA, LYTGALFLLFLSAISLLAGWFHLQ, LNHHLSGLFGVSSLAWTGHLVHVAI, IAHHHLAIAFIFLVAGHMY, LHFQLGLALASLGVITSLVAQHMY, AALYTHHQYIAGFIMTGAFAHGAIFFI, AIISHLSWASLFLGFHTLGLYVH, and FLVHHAIALGLHTTTLILV. Positions 559 and 568 each coordinate [4Fe-4S] cluster. Transmembrane regions (helical) follow at residues 575–596 and 643–665; these read AFYLAVFWMLNTIGWVTFYWHW and LSVWAWMFLFGHLVWATGFMFLI. Residues histidine 654, methionine 662, and tyrosine 670 each contribute to the chlorophyll a site. Position 671 (tryptophan 671) interacts with phylloquinone. A helical transmembrane segment spans residues 707 to 727; the sequence is LVGLAHFSVGYIFTYAAFLIA.

It belongs to the PsaA/PsaB family. In terms of assembly, the PsaA/B heterodimer binds the P700 chlorophyll special pair and subsequent electron acceptors. PSI consists of a core antenna complex that captures photons, and an electron transfer chain that converts photonic excitation into a charge separation. The eukaryotic PSI reaction center is composed of at least 11 subunits. Requires P700 is a chlorophyll a/chlorophyll a' dimer, A0 is one or more chlorophyll a, A1 is one or both phylloquinones and FX is a shared 4Fe-4S iron-sulfur center. as cofactor.

The protein localises to the plastid. The protein resides in the chloroplast thylakoid membrane. The enzyme catalyses reduced [plastocyanin] + hnu + oxidized [2Fe-2S]-[ferredoxin] = oxidized [plastocyanin] + reduced [2Fe-2S]-[ferredoxin]. PsaA and PsaB bind P700, the primary electron donor of photosystem I (PSI), as well as the electron acceptors A0, A1 and FX. PSI is a plastocyanin-ferredoxin oxidoreductase, converting photonic excitation into a charge separation, which transfers an electron from the donor P700 chlorophyll pair to the spectroscopically characterized acceptors A0, A1, FX, FA and FB in turn. Oxidized P700 is reduced on the lumenal side of the thylakoid membrane by plastocyanin. The chain is Photosystem I P700 chlorophyll a apoprotein A2 from Jasminum nudiflorum (Winter jasmine).